The primary structure comprises 539 residues: Chaperonin GroEL (539 aa).

ATP is bound by residues threonine 29–proline 32, aspartate 86–threonine 90, glycine 413, aspartate 479–leucine 481, and aspartate 495.

Belongs to the chaperonin (HSP60) family. In terms of assembly, forms a cylinder of 14 subunits composed of two heptameric rings stacked back-to-back. Interacts with the co-chaperonin GroES.

It localises to the cytoplasm. It catalyses the reaction ATP + H2O + a folded polypeptide = ADP + phosphate + an unfolded polypeptide.. Functionally, together with its co-chaperonin GroES, plays an essential role in assisting protein folding. The GroEL-GroES system forms a nano-cage that allows encapsulation of the non-native substrate proteins and provides a physical environment optimized to promote and accelerate protein folding. This is Chaperonin GroEL from Thermosipho africanus (strain TCF52B).